Here is an 87-residue protein sequence, read N- to C-terminus: Small ribosomal subunit protein uS17 (87 aa).

Belongs to the universal ribosomal protein uS17 family. In terms of assembly, part of the 30S ribosomal subunit.

In terms of biological role, one of the primary rRNA binding proteins, it binds specifically to the 5'-end of 16S ribosomal RNA. This Oceanobacillus iheyensis (strain DSM 14371 / CIP 107618 / JCM 11309 / KCTC 3954 / HTE831) protein is Small ribosomal subunit protein uS17.